Reading from the N-terminus, the 590-residue chain is Transcription factor GTE7 (590 aa).

Positions 125–160 are disordered; that stretch reads LNNFTGEKNDLGPKKKKQKKNVSGLKRSNQFGPSDP. The region spanning 164 to 270 is the Bromo domain; that stretch reads KLLAGMLNTC…DHFDGMFNPA (107 aa). Disordered regions lie at residues 282 to 400 and 476 to 590; these read TGSS…KDPN and RQGF…EAQC. A compositionally biased stretch (basic and acidic residues) spans 288-298; it reads PEPDFKPDFKQ. Residues 347 to 369 show a composition bias toward pro residues; sequence PSPPPPPPVIQPELPQPQPPPPQ. The 82-residue stretch at 394-475 folds into the NET domain; the sequence is PKAKDPNKRL…NYKKMASKIK (82 aa). The span at 498-508 shows a compositional bias: basic and acidic residues; it reads SAEKRTRRGDA. Residues 509 to 521 are compositionally biased toward acidic residues; sequence GEEDVDIGEDIPI. The segment covering 537 to 562 has biased composition (low complexity); that stretch reads AAAASSGSSSSGSSSSSGGSSSSSDS.

The protein resides in the nucleus. The protein is Transcription factor GTE7 (GTE7) of Arabidopsis thaliana (Mouse-ear cress).